Consider the following 484-residue polypeptide: Glutamate--tRNA ligase (484 aa).

The 'HIGH' region motif lies at 11–21; it reads PSPTGYPHLGN. Zn(2+) contacts are provided by cysteine 108, cysteine 110, cysteine 135, and aspartate 137. Residues 245–249 carry the 'KMSKS' region motif; it reads KLSKR. Lysine 248 is an ATP binding site.

This sequence belongs to the class-I aminoacyl-tRNA synthetase family. Glutamate--tRNA ligase type 1 subfamily. In terms of assembly, monomer. It depends on Zn(2+) as a cofactor.

The protein resides in the cytoplasm. It catalyses the reaction tRNA(Glu) + L-glutamate + ATP = L-glutamyl-tRNA(Glu) + AMP + diphosphate. Its function is as follows. Catalyzes the attachment of glutamate to tRNA(Glu) in a two-step reaction: glutamate is first activated by ATP to form Glu-AMP and then transferred to the acceptor end of tRNA(Glu). The protein is Glutamate--tRNA ligase of Dehalococcoides mccartyi (strain ATCC BAA-2266 / KCTC 15142 / 195) (Dehalococcoides ethenogenes (strain 195)).